The sequence spans 183 residues: Photosystem I assembly protein Ycf4 (183 aa).

The next 2 helical transmembrane spans lie at N17–Y39 and F59–Y81.

This sequence belongs to the Ycf4 family.

It localises to the plastid. The protein resides in the chloroplast thylakoid membrane. In terms of biological role, seems to be required for the assembly of the photosystem I complex. This chain is Photosystem I assembly protein Ycf4, found in Cyanidium caldarium (Red alga).